Reading from the N-terminus, the 472-residue chain is 3beta,22alpha-dihydroxysteroid 3-dehydrogenase (472 aa).

The helical transmembrane segment at 1-21 (MAFTAFLLLLSSIAAGFLLLL) threads the bilayer. Cys418 contributes to the heme binding site.

The protein belongs to the cytochrome P450 family. The cofactor is heme.

It is found in the membrane. It carries out the reaction (22S)-22-hydroxycampesterol + reduced [NADPH--hemoprotein reductase] + O2 = (22S)-22-hydroxycampest-4-en-3-one + oxidized [NADPH--hemoprotein reductase] + 2 H2O + H(+). It catalyses the reaction 6-deoxoteasterone + reduced [NADPH--hemoprotein reductase] + O2 = 3-dehydro-6-deoxoteasterone + oxidized [NADPH--hemoprotein reductase] + 2 H2O + H(+). The catalysed reaction is 6-deoxycathasterone + reduced [NADPH--hemoprotein reductase] + O2 = (22S,24R)-22-hydroxy-5alpha-ergostan-3-one + oxidized [NADPH--hemoprotein reductase] + 2 H2O + H(+). The enzyme catalyses (22R,23R)-22,23-dihydroxycampesterol + reduced [NADPH--hemoprotein reductase] + O2 = (22R,23R)-22,23-dihydroxycampest-4-en-3-one + oxidized [NADPH--hemoprotein reductase] + 2 H2O + H(+). It functions in the pathway plant hormone biosynthesis; brassinosteroid biosynthesis. Its function is as follows. Catalyzes C3-oxidation steps in brassinosteroids biosynthesis. Converts (22S)-22-hydroxycampesterol (22-OHCR) to (22S,24R)-22-hydroxyergost-4-en-3-one (22-hydroxy-campesta-4-en-3-one, 22-OH-4-en-3-one), 6-deoxocathasterone (6-deoxoCT) to (22S,24R)-22-hydroxy-5alpha-ergostan-3-one (22-hydroxy-campesta-3-one, 22-OH-3-one), (22R,23R)-22,23-dihydroxycampesterol (22,23-diOHCR) to (22R,23R)-22,23-dihydroxy-campest-4-en-3-one (22,23-diOH-4-en-3-one), and 6-deoxoteasterone (6-deoxoTE) to 3-dehydro-6-deoxoteasterone (6-deoxo3DT, 6-deoxo-3-DHT). This is 3beta,22alpha-dihydroxysteroid 3-dehydrogenase from Arabidopsis thaliana (Mouse-ear cress).